A 106-amino-acid polypeptide reads, in one-letter code: Small ribosomal subunit protein uS10 (106 aa).

The protein belongs to the universal ribosomal protein uS10 family. As to quaternary structure, part of the 30S ribosomal subunit.

Its function is as follows. Involved in the binding of tRNA to the ribosomes. This chain is Small ribosomal subunit protein uS10, found in Prochlorococcus marinus (strain MIT 9301).